The chain runs to 291 residues: Pantothenate synthetase (291 aa).

33 to 40 (MGALHEGH) is an ATP binding site. The Proton donor role is filled by His-40. Residue Gln-64 participates in (R)-pantoate binding. Gln-64 is a beta-alanine binding site. 157–160 (GEKD) contacts ATP. Residue Gln-163 participates in (R)-pantoate binding. Residues Val-186 and 194-197 (LSSR) each bind ATP.

The protein belongs to the pantothenate synthetase family. As to quaternary structure, homodimer.

The protein resides in the cytoplasm. It catalyses the reaction (R)-pantoate + beta-alanine + ATP = (R)-pantothenate + AMP + diphosphate + H(+). It participates in cofactor biosynthesis; (R)-pantothenate biosynthesis; (R)-pantothenate from (R)-pantoate and beta-alanine: step 1/1. In terms of biological role, catalyzes the condensation of pantoate with beta-alanine in an ATP-dependent reaction via a pantoyl-adenylate intermediate. The sequence is that of Pantothenate synthetase from Rubrobacter xylanophilus (strain DSM 9941 / JCM 11954 / NBRC 16129 / PRD-1).